Consider the following 66-residue polypeptide: Brevinin-1CDYd (66 aa).

The first 22 residues, 1–22, serve as a signal peptide directing secretion; the sequence is MFTLKKSLLILFFLGTINFSLC. A propeptide spanning residues 23 to 44 is cleaved from the precursor; the sequence is EEERNAEEERRDDPEERDVEVE. Cysteines 60 and 66 form a disulfide.

Belongs to the frog skin active peptide (FSAP) family. Brevinin subfamily. Expressed by the skin glands.

The protein localises to the secreted. In terms of biological role, antimicrobial peptide. In Rana dybowskii (Dybovsky's frog), this protein is Brevinin-1CDYd.